The sequence spans 171 residues: Photosystem I assembly protein Ycf3 (171 aa).

3 TPR repeats span residues 35–68 (AFTY…EIDP), 72–105 (SYIL…NPSL), and 120–153 (GEQA…APNN).

The protein belongs to the Ycf3 family.

It is found in the plastid. It localises to the chloroplast thylakoid membrane. Functionally, essential for the assembly of the photosystem I (PSI) complex. May act as a chaperone-like factor to guide the assembly of the PSI subunits. The chain is Photosystem I assembly protein Ycf3 from Psilotum nudum (Whisk fern).